The sequence spans 1118 residues: MKKANRSAGSVPKVSGISKPQTVEKSKSENSSSAPTGGKPVKPGAAAALSKTKSNDDLLAGMAGGVNVTNGVKAKKSNCSSAAPSAPAPAMTISESKSKSSTGTSSSAKRSTSAGNKESSSTRERLRERTRLNQSKKLPSVSQGANDVALAKRSRSRTATEGDIRMSKSKSDNQISDKAALEAKVKDLLTLAKTKDVEILHLRNELRDMRAQLGISEDHCEGEDRSEEKETIIAHQPTDVESTLLQLQEQNTAIREELNQLKNENRMLKDRLNALGFSLEQRLDNSEKLFGYQSLSPEITPGNQSDGGGTLTSSVEGSAPGSVEDLLSQDENTLMAHQHSNSMDNLDSECSEVYQPLTSSDDALDAPSSSESEGVPSIERSRKGSSGNASEVSVACLTERIHQMEENQHSTSEELQATLQELADLQQITQELNSENERLGEEKVILMESLCQQSDKLEHFGRQIEYFRSLLDEHHISYVIDEDVKSGRYMELEQRYMDLAENARFEREQLLGVQQHLSNTLKMAEQDNKEAQEMIGALKERSHHMERIIESEQKGKAALAATLEEYKATVASDQIEMNRLKAQLEKEKQKVAELYSIHNSGDKSDIQDLLESVRLDKEKAETLASSLQEDLAHTRNDANRLQDTIAKVEDEYRAFQEEAKKQIEDLNMTLEKLRSELEEKETERSDMKETIFELEDEVEQHRAVKLHDNLIISDLENTVKKLQDQKHDLERENKTLHRRLREESAEWRQFQADLQTAVVIANDIKSEAQEEIGDLKRRLHEAQEKNEKLTKELEEIKSRKQEEERGRVYNYMNAVERDLAALRQGMGLSRRSSTSSEPTPTVKTLIKSFDSASQVPNAAAAAIPRTPLSPSPMKTPPAAAVSPMQRHSISGPVSTSKPLTALSDKRSNYGEIPGQEHLLRTSSTSRPASLPRVPAMESAKTISVSRRSSEEMKRDISASEGASPASLMAMGTTSPQLSLSSSPTASVTPSTRSRIREERKDPLSALAREYGGSKRNALLKWCQKKTEGYQNIDITNFSSSWNDGLAFCALLHTYLPAHIPYQELNSQEKKRNFTLAFQAAESVGIKSTLDINEMARTERPDWQNVMLYVTAIYKYFET.

4 disordered regions span residues 1-50, 75-175, 294-324, and 359-391; these read MKKA…AALS, KKSN…DNQI, SLSPEITPGNQSDGGGTLTSSVEGSAPGSVE, and SSDDALDAPSSSESEGVPSIERSRKGSSGNASE. Low complexity-rich tracts occupy residues 34–48, 80–90, and 99–113; these read APTGGKPVKPGAAAA, SSAAPSAPAPA, and KSSTGTSSSAKRSTS. Positions 120–131 are enriched in basic and acidic residues; sequence SSTRERLRERTR. The segment covering 133–145 has biased composition (polar residues); the sequence is NQSKKLPSVSQGA. Positions 158–171 are enriched in basic and acidic residues; it reads TATEGDIRMSKSKS. Positions 168 to 281 form a coiled coil; it reads KSKSDNQISD…LNALGFSLEQ (114 aa). Polar residues predominate over residues 294–304; the sequence is SLSPEITPGNQ. Positions 359-373 are enriched in low complexity; the sequence is SSDDALDAPSSSESE. 3 positions are modified to phosphoserine: Ser-385, Ser-386, and Ser-390. 2 coiled-coil regions span residues 395-450 and 488-808; these read ACLT…MESL and RYME…RGRV. Phosphoserine occurs at positions 869, 882, and 888. Residues 916-999 are disordered; sequence EHLLRTSSTS…STRSRIREER (84 aa). Basic and acidic residues predominate over residues 947 to 957; the sequence is RSSEEMKRDIS. The span at 972 to 992 shows a compositional bias: low complexity; that stretch reads TTSPQLSLSSSPTASVTPSTR. Positions 1012 to 1117 constitute a Calponin-homology (CH) domain; sequence GSKRNALLKW…YVTAIYKYFE (106 aa).

It belongs to the cytospin-A family. As to quaternary structure, may interact with both microtubules and actin cytoskeleton.

The protein resides in the cytoplasm. The protein localises to the cytoskeleton. It localises to the spindle. It is found in the cell junction. Its subcellular location is the gap junction. In terms of biological role, involved in cytokinesis and spindle organization. May play a role in actin cytoskeleton organization and microtubule stabilization and hence required for proper cell adhesion and migration. In Rattus norvegicus (Rat), this protein is Cytospin-A (Specc1l).